Reading from the N-terminus, the 249-residue chain is Proteasome subunit alpha type-3 (249 aa).

Serine 2 is subject to N-acetylserine. Serine 214 and serine 220 each carry O-acetylserine. Lysine 221 is covalently cross-linked (Glycyl lysine isopeptide (Lys-Gly) (interchain with G-Cter in ubiquitin)).

It belongs to the peptidase T1A family. Component of the 20S core complex of the 26S proteasome. The 26S proteasome is composed of a core protease (CP), known as the 20S proteasome, capped at one or both ends by the 19S regulatory particle (RP/PA700). The 20S proteasome core is composed of 28 subunits that are arranged in four stacked rings, resulting in a barrel-shaped structure. The two end rings are each formed by seven alpha subunits, and the two central rings are each formed by seven beta subunits. The catalytic chamber with the active sites is on the inside of the barrel. In terms of tissue distribution, ubiquitous low levels.

The protein localises to the cytoplasm. The protein resides in the nucleus. The proteasome is a multicatalytic proteinase complex which is characterized by its ability to cleave peptides with Arg, Phe, Tyr, Leu, and Glu adjacent to the leaving group at neutral or slightly basic pH. The proteasome has an ATP-dependent proteolytic activity. This Arabidopsis thaliana (Mouse-ear cress) protein is Proteasome subunit alpha type-3 (PAG1).